Here is a 105-residue protein sequence, read N- to C-terminus: Early E3A 12.1 kDa protein (105 aa).

It belongs to the adenoviridae E3A-2 family.

Its function is as follows. Not yet known. This Human adenovirus A serotype 12 (HAdV-12) protein is Early E3A 12.1 kDa protein.